Consider the following 471-residue polypeptide: 6-phosphofructo-2-kinase/fructose-2,6-bisphosphatase 1 (471 aa).

The residue at position 2 (Ser-2) is an N-acetylserine. Residues 2–250 (SREMGELTQT…AYYLMNIHVT (249 aa)) are 6-phosphofructo-2-kinase. At Ser-33 the chain carries Phosphoserine; by PKA. Position 49–57 (49–57 (GLPARGKTY)) interacts with ATP. Residues Arg-82 and Arg-105 each coordinate beta-D-fructose 6-phosphate. Residue Asp-131 is part of the active site. Residues Thr-133 and Arg-139 each coordinate beta-D-fructose 6-phosphate. Ser-141 bears the Phosphoserine mark. Cys-161 is an active-site residue. 170–175 (NIKQVK) lines the ATP pocket. Lys-175, Arg-196, and Tyr-200 together coordinate beta-D-fructose 6-phosphate. Residues 251–471 (PRSIYLCRHG…EALDTVPAHY (221 aa)) are fructose-2,6-bisphosphatase. Arg-258 provides a ligand contact to beta-D-fructose 2,6-bisphosphate. His-259 (tele-phosphohistidine intermediate) is an active-site residue. Residues Asn-265, Gly-271, and Arg-308 each coordinate beta-D-fructose 2,6-bisphosphate. Catalysis depends on Glu-328, which acts as the Proton donor/acceptor. Residues Tyr-339, Arg-353, Lys-357, Tyr-368, Gln-394, and Arg-398 each contribute to the beta-D-fructose 2,6-bisphosphate site. 350–353 (FALR) serves as a coordination point for ATP. ATP is bound by residues 394-398 (QAVMR) and Tyr-430.

This sequence in the C-terminal section; belongs to the phosphoglycerate mutase family. In terms of assembly, homodimer. As to expression, liver.

The catalysed reaction is beta-D-fructose 2,6-bisphosphate + H2O = beta-D-fructose 6-phosphate + phosphate. It carries out the reaction beta-D-fructose 6-phosphate + ATP = beta-D-fructose 2,6-bisphosphate + ADP + H(+). With respect to regulation, phosphorylation at Ser-33 inhibits the kinase and activates the bisphosphatase. Its function is as follows. Synthesis and degradation of fructose 2,6-bisphosphate. The polypeptide is 6-phosphofructo-2-kinase/fructose-2,6-bisphosphatase 1 (Rattus norvegicus (Rat)).